We begin with the raw amino-acid sequence, 125 residues long: MYHLMLVCLGGAIGAGMRHLTVTAAGRALGTAFPWGTLAVNVAGSFAMGLLVEALARKFSVSNEIRLLLAPGMLGGFTTFSAFSLDVAVLWERGAQSAALAYVLASVAGSILALFVGLWLARSIL.

Transmembrane regions (helical) follow at residues 4–24 (LMLV…TVTA), 32–52 (AFPW…GLLV), 67–87 (LLLA…SLDV), and 100–120 (LAYV…GLWL). Gly75 and Thr78 together coordinate Na(+).

Belongs to the fluoride channel Fluc/FEX (TC 1.A.43) family.

The protein resides in the cell inner membrane. It catalyses the reaction fluoride(in) = fluoride(out). Na(+) is not transported, but it plays an essential structural role and its presence is essential for fluoride channel function. Functionally, fluoride-specific ion channel. Important for reducing fluoride concentration in the cell, thus reducing its toxicity. This chain is Fluoride-specific ion channel FluC, found in Chelativorans sp. (strain BNC1).